A 2151-amino-acid polypeptide reads, in one-letter code: Protein PRR14L (2151 aa).

2 stretches are compositionally biased toward basic and acidic residues: residues 112-123 (KRSESMEPKVFR) and 134-154 (EPSE…EEKT). Disordered stretches follow at residues 112 to 160 (KRSE…SQED), 206 to 225 (GTKT…KDLS), and 314 to 350 (QLHG…SDLS). Ser-157 carries the phosphoserine modification. Polar residues predominate over residues 322-350 (QPSSTHDSPTATSPLKENSEVSCFTSDLS). Residues Ser-582 and Ser-945 each carry the phosphoserine modification. The interval 974 to 1017 (SNQNRPDECKSEGQSAKEMLSSDQRETVTEPHGEVNHNQKDLLV) is disordered. The segment covering 996-1013 (DQRETVTEPHGEVNHNQK) has biased composition (basic and acidic residues). Ser-1029 bears the Phosphoserine mark. Residues 1091-1103 (DSRSTLSRRELDA) are compositionally biased toward basic and acidic residues. Disordered stretches follow at residues 1091 to 1115 (DSRS…DSDF), 1178 to 1226 (DSHY…SCHD), 1782 to 1802 (TGVH…PLQD), and 1986 to 2012 (AACP…KVSQ). The segment covering 1178–1187 (DSHYGQQDKG) has biased composition (polar residues). The span at 1188-1201 (TSLRETQEMTEGSR) shows a compositional bias: basic and acidic residues.

This chain is Protein PRR14L (PRR14L), found in Homo sapiens (Human).